The primary structure comprises 501 residues: Glycerol kinase (501 aa).

Thr12 serves as a coordination point for ADP. Residues Thr12, Thr13, and Ser14 each contribute to the ATP site. Thr12 serves as a coordination point for sn-glycerol 3-phosphate. Arg16 is an ADP binding site. Residues Arg82, Glu83, Tyr134, and Asp244 each contribute to the sn-glycerol 3-phosphate site. The glycerol site is built by Arg82, Glu83, Tyr134, Asp244, and Gln245. The ADP site is built by Thr266 and Gly310. 4 residues coordinate ATP: Thr266, Gly310, Gln314, and Gly411. ADP is bound by residues Gly411 and Asn415.

The protein belongs to the FGGY kinase family.

It catalyses the reaction glycerol + ATP = sn-glycerol 3-phosphate + ADP + H(+). The protein operates within polyol metabolism; glycerol degradation via glycerol kinase pathway; sn-glycerol 3-phosphate from glycerol: step 1/1. Its activity is regulated as follows. Inhibited by fructose 1,6-bisphosphate (FBP). Key enzyme in the regulation of glycerol uptake and metabolism. Catalyzes the phosphorylation of glycerol to yield sn-glycerol 3-phosphate. This chain is Glycerol kinase, found in Methylorubrum populi (strain ATCC BAA-705 / NCIMB 13946 / BJ001) (Methylobacterium populi).